We begin with the raw amino-acid sequence, 185 residues long: Elongation factor P (185 aa).

This sequence belongs to the elongation factor P family.

It is found in the cytoplasm. It participates in protein biosynthesis; polypeptide chain elongation. Its function is as follows. Involved in peptide bond synthesis. Stimulates efficient translation and peptide-bond synthesis on native or reconstituted 70S ribosomes in vitro. Probably functions indirectly by altering the affinity of the ribosome for aminoacyl-tRNA, thus increasing their reactivity as acceptors for peptidyl transferase. This chain is Elongation factor P, found in Clostridium novyi (strain NT).